The primary structure comprises 483 residues: HSPB1-associated protein 1 (483 aa).

The tract at residues methionine 1–lysine 26 is disordered. The segment at glutamate 88–arginine 208 is interaction with HSPB1. The region spanning tryptophan 124–threonine 288 is the JmjC domain. The segment at leucine 388 to histidine 416 is disordered.

As to quaternary structure, interacts with CRYAB and HSPB1.

The protein localises to the cytoplasm. Its function is as follows. May play a role in cellular stress response. This chain is HSPB1-associated protein 1 (Hspbap1), found in Mus musculus (Mouse).